The following is a 359-amino-acid chain: Aromatic amino acid aminotransferase (359 aa).

Residue K223 is modified to N6-(pyridoxal phosphate)lysine.

The protein belongs to the class-II pyridoxal-phosphate-dependent aminotransferase family. As to quaternary structure, homodimer. Requires pyridoxal 5'-phosphate as cofactor.

The catalysed reaction is an aromatic L-alpha-amino acid + 2-oxoglutarate = an aromatic oxo-acid + L-glutamate. Aminotransferase that catalyzes the conversion of aromatic amino acids and 2-oxoglutarate into corresponding aromatic oxo acids and L-glutamate. The polypeptide is Aromatic amino acid aminotransferase (Streptomyces avermitilis (strain ATCC 31267 / DSM 46492 / JCM 5070 / NBRC 14893 / NCIMB 12804 / NRRL 8165 / MA-4680)).